The following is a 64-amino-acid chain: Large ribosomal subunit protein bL35 (64 aa).

Positions 1-26 are enriched in basic residues; that stretch reads MPKIKTHRGAAKRFKKTGTGKIKRSK. Residues 1-48 form a disordered region; it reads MPKIKTHRGAAKRFKKTGTGKIKRSKAYASHLLGGKSPKRKRNLRKAG.

This sequence belongs to the bacterial ribosomal protein bL35 family.

The polypeptide is Large ribosomal subunit protein bL35 (Syntrophomonas wolfei subsp. wolfei (strain DSM 2245B / Goettingen)).